The chain runs to 197 residues: MTNVPTDDGPWLVVGLGNPGPGYAGNRHNAGFMVVDLLAERAGSRLKSHRSRADVAEVRLAGTRAILARPLSFMNLSGGPVSAVRTFYKIDPARVIVVHDELDIPFGSVRLKRGGGDNGHNGLRSISSALGTRDYLRVRVGIGRPPGRMDPADYVLRDFAAAERRELPLLLEHSADSVEMLITDGLEPTQNRYHALL.

TRNA is bound at residue Y23. H28 serves as the catalytic Proton acceptor. Residues F73, N75, and N121 each contribute to the tRNA site.

It belongs to the PTH family. As to quaternary structure, monomer.

It localises to the cytoplasm. The catalysed reaction is an N-acyl-L-alpha-aminoacyl-tRNA + H2O = an N-acyl-L-amino acid + a tRNA + H(+). Its function is as follows. Hydrolyzes ribosome-free peptidyl-tRNAs (with 1 or more amino acids incorporated), which drop off the ribosome during protein synthesis, or as a result of ribosome stalling. Functionally, catalyzes the release of premature peptidyl moieties from peptidyl-tRNA molecules trapped in stalled 50S ribosomal subunits, and thus maintains levels of free tRNAs and 50S ribosomes. The polypeptide is Peptidyl-tRNA hydrolase (Frankia alni (strain DSM 45986 / CECT 9034 / ACN14a)).